A 115-amino-acid chain; its full sequence is Nitrogen regulatory protein P-II 1 (115 aa).

An O-UMP-tyrosine modification is found at Tyr-54.

This sequence belongs to the P(II) protein family.

Its function is as follows. Could be involved in the regulation of nitrogen fixation. In Methanothermobacter thermautotrophicus (strain ATCC 29096 / DSM 1053 / JCM 10044 / NBRC 100330 / Delta H) (Methanobacterium thermoautotrophicum), this protein is Nitrogen regulatory protein P-II 1.